The primary structure comprises 155 residues: Small ribosomal subunit protein uS7 (155 aa).

The protein belongs to the universal ribosomal protein uS7 family. As to quaternary structure, part of the 30S ribosomal subunit. Contacts proteins S9 and S11.

Functionally, one of the primary rRNA binding proteins, it binds directly to 16S rRNA where it nucleates assembly of the head domain of the 30S subunit. Is located at the subunit interface close to the decoding center, probably blocks exit of the E-site tRNA. In Thermotoga petrophila (strain ATCC BAA-488 / DSM 13995 / JCM 10881 / RKU-1), this protein is Small ribosomal subunit protein uS7.